A 128-amino-acid polypeptide reads, in one-letter code: Sulfurtransferase TusD (128 aa).

Residue Cys78 is the Cysteine persulfide intermediate of the active site.

Belongs to the DsrE/TusD family. Heterohexamer, formed by a dimer of trimers. The hexameric TusBCD complex contains 2 copies each of TusB, TusC and TusD. The TusBCD complex interacts with TusE.

The protein localises to the cytoplasm. Functionally, part of a sulfur-relay system required for 2-thiolation of 5-methylaminomethyl-2-thiouridine (mnm(5)s(2)U) at tRNA wobble positions. Accepts sulfur from TusA and transfers it in turn to TusE. This Buchnera aphidicola subsp. Schizaphis graminum (strain Sg) protein is Sulfurtransferase TusD.